A 249-amino-acid chain; its full sequence is Ciliogenesis and planar polarity effector 2 (249 aa).

The small GTPase-like stretch occupies residues 46 to 249; sequence PADVAAYKVF…VIAGLVGGAE (204 aa). GTP is bound by residues 58 to 65 and 171 to 174; these read GKSGVGKT and TKLD.

Belongs to the small GTPase superfamily. Rab family. In terms of assembly, interacts with fuz.

It is found in the cytoplasm. Its subcellular location is the cytoskeleton. The protein localises to the cilium basal body. Potential effector of the planar cell polarity signaling pathway. Plays a role in targeted membrane trafficking most probably at the level of vesicle fusion with membranes. Involved in cilium biogenesis by regulating the transport of cargo proteins to the basal body and to the apical tips of cilia. More generally involved in exocytosis in secretory cells. This is Ciliogenesis and planar polarity effector 2 from Xenopus laevis (African clawed frog).